Consider the following 504-residue polypeptide: Maturase K (504 aa).

It belongs to the intron maturase 2 family. MatK subfamily.

It is found in the plastid. The protein resides in the chloroplast. In terms of biological role, usually encoded in the trnK tRNA gene intron. Probably assists in splicing its own and other chloroplast group II introns. This Gossypium turneri (Cotton) protein is Maturase K.